The primary structure comprises 107 residues: Wound-induced proteinase inhibitor 1 (107 aa).

An N-terminal signal peptide occupies residues 1-23 (MESKFAHIIVFFLLATSFETLLA). The propeptide occupies 24–36 (RKESDGPEVIELQ).

Belongs to the protease inhibitor I13 (potato type I serine protease inhibitor) family. As to quaternary structure, heterogeneous tetramers of similar chains.

Inhibits both chymotrypsin and trypsin. The protein is Wound-induced proteinase inhibitor 1 of Solanum tuberosum (Potato).